Consider the following 455-residue polypeptide: Asparagine--tRNA ligase (455 aa).

Belongs to the class-II aminoacyl-tRNA synthetase family. As to quaternary structure, homodimer.

It localises to the cytoplasm. The enzyme catalyses tRNA(Asn) + L-asparagine + ATP = L-asparaginyl-tRNA(Asn) + AMP + diphosphate + H(+). The polypeptide is Asparagine--tRNA ligase (Mycoplasma pneumoniae (strain ATCC 29342 / M129 / Subtype 1) (Mycoplasmoides pneumoniae)).